Reading from the N-terminus, the 475-residue chain is ATP-dependent protease ATPase subunit HslU1 (475 aa).

The transit peptide at 1 to 27 (MMRRVTSSLPSALKLGRSLGPNVRFSG) directs the protein to the mitochondrion. Residues Ile66, 108 to 113 (GVGKTE), Asp286, Glu353, and Arg425 each bind ATP.

This sequence belongs to the ClpX chaperone family. HslU subfamily. A double ring-shaped homohexamer of HslV is capped on each side by a ring-shaped HslU homohexamer. The assembly of the HslU/HslV complex (HslVU) is dependent on binding of ATP.

It localises to the mitochondrion matrix. Its subcellular location is the kinetoplast. In terms of biological role, ATPase subunit of a proteasome-like degradation complex; this subunit has chaperone activity. The binding of ATP and its subsequent hydrolysis by HslU are essential for unfolding of protein substrates subsequently hydrolyzed by HslV. HslU recognizes the N-terminal part of its protein substrates and unfolds these before they are guided to HslV for hydrolysis. The HslVU protease complex functions in mitochondrial DNA replication by regulating DNA helicase PIF2 protein levels. This Trypanosoma brucei brucei (strain 927/4 GUTat10.1) protein is ATP-dependent protease ATPase subunit HslU1 (HslU1).